Consider the following 1185-residue polypeptide: Pyruvate carboxylase (1185 aa).

Residues 32–484 (KFTKVLVANR…WTTFIDDTPE (453 aa)) enclose the Biotin carboxylation domain. Residues Lys-150, Glu-234, and His-269 each contribute to the ATP site. The ATP-grasp domain maps to 154–351 (RAIAIRCGVP…IVSAQLHVAA (198 aa)). The active site involves Arg-326. The Pyruvate carboxyltransferase domain occupies 570–838 (GLIMDTTWRD…QLEFDNNQLR (269 aa)). Substrate is bound by residues 578 to 582 (RDAHQ) and Arg-651. Asp-579 lines the a divalent metal cation pocket. Positions 747, 777, and 779 each coordinate a divalent metal cation. Lys-747 is subject to N6-carboxylysine. Residue Thr-912 coordinates substrate. Residues 1108 to 1183 (RADPGNPGHV…NGGDLCAVLE (76 aa)) form the Biotinyl-binding domain. The residue at position 1149 (Lys-1149) is an N6-biotinyllysine.

The cofactor is biotin. It depends on Zn(2+) as a cofactor.

The protein resides in the cytoplasm. The enzyme catalyses hydrogencarbonate + pyruvate + ATP = oxaloacetate + ADP + phosphate + H(+). It functions in the pathway carbohydrate biosynthesis; gluconeogenesis. In terms of biological role, pyruvate carboxylase catalyzes a 2-step reaction, involving the ATP-dependent carboxylation of the covalently attached biotin in the first step and the transfer of the carboxyl group to pyruvate in the second. This is Pyruvate carboxylase (pyr1) from Schizosaccharomyces pombe (strain 972 / ATCC 24843) (Fission yeast).